The chain runs to 231 residues: MQHTVDIQAIESKLNFTFSHPRLLITALTHPSYRNEFPSAEEDSERLEFLGDAVLGLVVTEHLFLLFPALNEGLLSTTRAALVNAEACFEYTQKLSLGEHLLIGRGEKMQSHRGKISAYANLFEAILGAVYLDGGLSPARQIIVPLLPDKESILPLMLVNPKNRLQQFTQQTLKVLPSYKALPWKSEDGSPGYHVQVFVNGDLWGEGFAGSKKEAEKLAAKQALSTHDNKN.

An RNase III domain is found at 7–135 (IQAIESKLNF…ILGAVYLDGG (129 aa)). Glu-48 provides a ligand contact to Mg(2+). Asp-52 is an active-site residue. Positions 121 and 124 each coordinate Mg(2+). Glu-124 is a catalytic residue. A DRBM domain is found at 160–229 (NPKNRLQQFT…AKQALSTHDN (70 aa)).

Belongs to the ribonuclease III family. As to quaternary structure, homodimer. Requires Mg(2+) as cofactor.

It localises to the cytoplasm. It catalyses the reaction Endonucleolytic cleavage to 5'-phosphomonoester.. In terms of biological role, digests double-stranded RNA. Involved in the processing of primary rRNA transcript to yield the immediate precursors to the large and small rRNAs (23S and 16S). Processes some mRNAs, and tRNAs when they are encoded in the rRNA operon. Processes pre-crRNA and tracrRNA of type II CRISPR loci if present in the organism. The sequence is that of Ribonuclease 3 from Chlamydia trachomatis serovar L2 (strain ATCC VR-902B / DSM 19102 / 434/Bu).